A 704-amino-acid chain; its full sequence is Glycine--tRNA ligase beta subunit (704 aa).

The protein belongs to the class-II aminoacyl-tRNA synthetase family. Tetramer of two alpha and two beta subunits.

The protein resides in the cytoplasm. It catalyses the reaction tRNA(Gly) + glycine + ATP = glycyl-tRNA(Gly) + AMP + diphosphate. The sequence is that of Glycine--tRNA ligase beta subunit from Rhizobium etli (strain CIAT 652).